Here is a 90-residue protein sequence, read N- to C-terminus: MIDPETRHKAFLKAWPWQNSTITFVPGLAICHYSSVQVPRRGAILPMLYALCYVKMPSFQHGPGRMYHLTCDWPRKMSLSCHVCRAHFRD.

The protein is Putative transcript Y 12 protein (TTTY12) of Homo sapiens (Human).